The sequence spans 121 residues: UPF0102 protein Strop_1320 (121 aa).

The protein belongs to the UPF0102 family.

In Salinispora tropica (strain ATCC BAA-916 / DSM 44818 / JCM 13857 / NBRC 105044 / CNB-440), this protein is UPF0102 protein Strop_1320.